The sequence spans 213 residues: Urease accessory protein UreE (213 aa).

A disordered region spans residues 170 to 213 (EHHGHSHSHSHSHSHDHDHDHDHDHDHDHQHGPSCSHGHHHGHR). A compositionally biased stretch (basic and acidic residues) spans 182 to 200 (HSHDHDHDHDHDHDHDHQH).

The protein belongs to the UreE family.

It localises to the cytoplasm. Its function is as follows. Involved in urease metallocenter assembly. Binds nickel. Probably functions as a nickel donor during metallocenter assembly. The polypeptide is Urease accessory protein UreE (Burkholderia mallei (strain NCTC 10229)).